Reading from the N-terminus, the 168-residue chain is Cyclic pyranopterin monophosphate synthase (168 aa).

Substrate is bound by residues 75–77 (MCH) and 115–116 (ME). D130 is an active-site residue.

This sequence belongs to the MoaC family. Homohexamer; trimer of dimers.

The enzyme catalyses (8S)-3',8-cyclo-7,8-dihydroguanosine 5'-triphosphate = cyclic pyranopterin phosphate + diphosphate. It participates in cofactor biosynthesis; molybdopterin biosynthesis. Functionally, catalyzes the conversion of (8S)-3',8-cyclo-7,8-dihydroguanosine 5'-triphosphate to cyclic pyranopterin monophosphate (cPMP). The chain is Cyclic pyranopterin monophosphate synthase from Bacillus licheniformis (strain ATCC 14580 / DSM 13 / JCM 2505 / CCUG 7422 / NBRC 12200 / NCIMB 9375 / NCTC 10341 / NRRL NRS-1264 / Gibson 46).